The sequence spans 313 residues: Olfactory receptor 5H15 (313 aa).

Over 1 to 28 (MEEENATLLTEFVLTGFLYQPQWKIPLF) the chain is Extracellular. Residue Asn-5 is glycosylated (N-linked (GlcNAc...) asparagine). The chain crosses the membrane as a helical span at residues 29–49 (LAFLVIYLITIMGNLGLIAVI). The Cytoplasmic segment spans residues 50–56 (WKDPHLH). The chain crosses the membrane as a helical span at residues 57–77 (IPMYLLLGNLAFVDAWISSTV). Over 78–98 (TPKMLNNFLAKSKMISLSECK) the chain is Extracellular. Residues Cys-97 and Cys-179 are joined by a disulfide bond. Residues 99–119 (IQFFSIAIGVTTECFLLATMA) traverse the membrane as a helical segment. The Cytoplasmic segment spans residues 120–143 (YDRYVAICKPLLYPAIMTNGLCIR). The chain crosses the membrane as a helical span at residues 144 to 164 (LLILSYIAGILHALIHEGFLF). Residues 165–195 (RLTFCNSNIVHHIYCDTIPLSKISCTDSSIN) lie on the Extracellular side of the membrane. The chain crosses the membrane as a helical span at residues 196–216 (FLMVFIFSGSIQVFSIVTILI). Over 217-240 (SYTFVLFTVLEKKSDKGVRKAFST) the chain is Cytoplasmic. Residues 241-261 (CGAHLFSVCLYYGPLLLMYVG) form a helical membrane-spanning segment. Topologically, residues 262–271 (PASPQADGQN) are extracellular. Residues 272-292 (MVEPLFYTVIIPLLNPIIYSL) form a helical membrane-spanning segment. Residues 293-313 (RNKQVIVSFIKMLKRNVKVSY) lie on the Cytoplasmic side of the membrane.

Belongs to the G-protein coupled receptor 1 family.

The protein localises to the cell membrane. In terms of biological role, odorant receptor. This chain is Olfactory receptor 5H15 (OR5H15), found in Homo sapiens (Human).